A 393-amino-acid polypeptide reads, in one-letter code: MASMVAFRPEAFLCFSPPKTTRSTRSPRISMASTVGPSTKVEIPKKPFMPPREVHVQVTHSMPPQKIEIFKSLEDWAENNILVHLKPVEKCWQPQDFLPDPSSEGFHEEVKELRERSKEIPDGYYVCLVGDMITEEALPTYQTMLNTLDGVRDETGASLTSWAVWTRAWTAEENRHGDLLNKYLYLSGRVDMKQIEKTIQYLIGSGMDPRTENSPYLGFIYTSFQERATFISHGNTARHAKEHGDVKLAQICGTIASDEKRHETAYTKIVEKLFEIDPDGTVLSFADMMKKKISMPAHLMYDGQDDNLFEHFSAVAQRLGVDTAKDYADILEFLINRWKVGELTGFSGEGKRAQDFVCTLAPRIRRIEERAQERAKQAPRIPCSWIYGREVQL.

The N-terminal 31 residues, 1–31, are a transit peptide targeting the chloroplast; the sequence is MASMVAFRPEAFLCFSPPKTTRSTRSPRISM. Residues Glu135, Glu173, His176, Glu226, Glu259, and His262 each contribute to the Fe cation site.

This sequence belongs to the fatty acid desaturase type 2 family. As to quaternary structure, homodimer. It depends on Fe(2+) as a cofactor.

It is found in the plastid. Its subcellular location is the chloroplast. The enzyme catalyses octadecanoyl-[ACP] + 2 reduced [2Fe-2S]-[ferredoxin] + O2 + 2 H(+) = (9Z)-octadecenoyl-[ACP] + 2 oxidized [2Fe-2S]-[ferredoxin] + 2 H2O. The protein operates within lipid metabolism; fatty acid metabolism. Its function is as follows. Converts stearoyl-ACP to oleoyl-ACP by introduction of a cis double bond between carbons 9 and 10 of the acyl chain. The polypeptide is Stearoyl-[acyl-carrier-protein] 9-desaturase, chloroplastic (Elaeis guineensis var. tenera (Oil palm)).